An 83-amino-acid chain; its full sequence is Sec-independent protein translocase protein TatA (83 aa).

The helical transmembrane segment at 1 to 21 threads the bilayer; it reads MGSFSIWHWLIVLLIVVMVFG. The disordered stretch occupies residues 44–83; that stretch reads KDGGQSAAATDDKPAAPAGQVTNAQASDKTTIDVEARQKS. Residues 63–72 are compositionally biased toward polar residues; the sequence is QVTNAQASDK. Basic and acidic residues predominate over residues 73-83; it reads TTIDVEARQKS.

This sequence belongs to the TatA/E family. The Tat system comprises two distinct complexes: a TatABC complex, containing multiple copies of TatA, TatB and TatC subunits, and a separate TatA complex, containing only TatA subunits. Substrates initially bind to the TatABC complex, which probably triggers association of the separate TatA complex to form the active translocon.

The protein localises to the cell inner membrane. Functionally, part of the twin-arginine translocation (Tat) system that transports large folded proteins containing a characteristic twin-arginine motif in their signal peptide across membranes. TatA could form the protein-conducting channel of the Tat system. This Polaromonas sp. (strain JS666 / ATCC BAA-500) protein is Sec-independent protein translocase protein TatA.